The following is a 1837-amino-acid chain: AF4/FMR2 family member lilli (1837 aa).

Disordered stretches follow at residues 1-25 (MAQQ…QQQQ), 65-109 (NLYS…PRRL), 162-295 (IQQQ…LHNG), 455-592 (QQLP…KKKY), 605-712 (TGLL…PGNV), 797-852 (PKSQ…LQIP), 868-1250 (NNMQ…GGAK), 1267-1311 (QQQQ…GLAS), and 1344-1466 (APSS…DPML). Residues 16–25 (HQQQQQQQQQ) show a composition bias toward low complexity. Basic and acidic residues predominate over residues 84 to 109 (REKYERQQGIQSDDRETSLFSEPRRL). 3 stretches are compositionally biased toward low complexity: residues 162–179 (IQQQ…VASS), 187–200 (QTQQ…QQQQ), and 247–264 (NSNS…SSSS). Thr468 carries the post-translational modification Phosphothreonine. Residues 475–488 (LKIEKNPILEKQDS) are compositionally biased toward basic and acidic residues. Residues 490 to 500 (LENDLELSESE) show a composition bias toward acidic residues. Phosphoserine occurs at positions 497 and 499. Composition is skewed to low complexity over residues 509-529 (SPGS…SESS) and 542-552 (QQQQQTQQQQL). The segment covering 553 to 563 (HGHHPQSHHHQ) has biased composition (basic residues). Residues 564-583 (QFLQQQLQRQQQQQQQQQQL) are compositionally biased toward low complexity. 2 stretches are compositionally biased toward gly residues: residues 612-633 (GGLG…GNGG) and 641-673 (GSMG…GIGS). Polar residues-rich tracts occupy residues 678–690 (NKTP…NKWN) and 698–711 (PTSQ…SPGN). Residues 815–837 (SESATSGSSSSSCSSSDSAASAS) are compositionally biased toward low complexity. A compositionally biased stretch (polar residues) spans 868 to 880 (NNMQKSQSMSVTV). Positions 892–902 (PRQKKPRKKKM) are enriched in basic residues. Phosphoserine occurs at positions 913 and 914. Composition is skewed to low complexity over residues 927–951 (VVAQ…ATTT) and 961–1013 (QQQQ…SSVL). The a.T hook DNA-binding region spans 952–964 (KKGRGRPRKQQQQ). Phosphoserine is present on residues Ser974 and Ser976. Over residues 1021-1033 (SQSSSNGNTPTKK) the composition is skewed to polar residues. Composition is skewed to low complexity over residues 1034-1049 (MSSI…SAAA), 1056-1091 (AVAA…SSSS), 1130-1139 (GSSSPTSSSS), and 1157-1173 (ISNS…VNNN). The segment covering 1174-1184 (LQQQAMPQQSP) has biased composition (polar residues). The span at 1189–1212 (LSGGSQQLSSSDSSSSSSGSSSSS) shows a compositional bias: low complexity. Residues 1217 to 1234 (DAKREKNRERKPKSDKNK) show a composition bias toward basic and acidic residues. The span at 1267–1276 (QQQQQQQQVQ) shows a compositional bias: low complexity. A compositionally biased stretch (polar residues) spans 1345-1355 (PSSSNQQNGHL). Basic residues predominate over residues 1373 to 1386 (KVKHEHHQLHHHSQ). Basic and acidic residues-rich tracts occupy residues 1393 to 1407 (VKPE…ETKF) and 1416 to 1432 (FQLK…ERDQ). A Phosphoserine modification is found at Ser1517. Residues 1550–1560 (AVQTTPPTSVT) are compositionally biased toward polar residues. Disordered stretches follow at residues 1550 to 1571 (AVQT…LVSQ) and 1727 to 1756 (GNTP…IVPQ). Low complexity predominate over residues 1727 to 1747 (GNTPSSISPSNSVGSQGSGSN).

It belongs to the AF4 family.

The protein resides in the nucleus. Functionally, has a role in transcriptional regulation. Acts in parallel with the Ras/MAPK and the PI3K/PKB pathways in the control of cell identity and cellular growth. Essential for regulation of the cytoskeleton and cell growth but not for cell proliferation or growth rate. Required specifically for the microtubule-based basal transport of lipid droplets. Plays a partially redundant function downstream of Raf in cell fate specification in the developing eye. Pair-rule protein that regulates embryonic cellularization, gastrulation and segmentation. This Drosophila willistoni (Fruit fly) protein is AF4/FMR2 family member lilli.